The sequence spans 442 residues: Chaperone protein dnaJ A6, chloroplastic (442 aa).

The transit peptide at 1-82 (MAIIQLGSTC…PRRGSRFTVR (82 aa)) directs the protein to the chloroplast. The J domain maps to 86 to 150 (DYYSVLGVSK…EKKSLYDRYG (65 aa)). The CR-type zinc-finger motif lies at 211–292 (GMEKEIEISR…CSGDGRVRKT (82 aa)). Residues Cys-224, Cys-227, Cys-241, Cys-244, Cys-267, Cys-270, Cys-280, and Cys-283 each coordinate Zn(2+). CXXCXGXG motif repeat units lie at residues 224–231 (CGTCEGSG), 241–248 (CTTCGGQG), 267–274 (CSSCNGTG), and 280–287 (CGTCSGDG).

The protein belongs to the DnaJ family.

The protein resides in the plastid. The protein localises to the chloroplast. Functionally, may function together with HSC70 chaperone to assist protein folding and prevent protein aggregation during heat stress in the chloroplast. The sequence is that of Chaperone protein dnaJ A6, chloroplastic from Arabidopsis thaliana (Mouse-ear cress).